A 200-amino-acid chain; its full sequence is HTH-type transcriptional repressor KstR2 (200 aa).

An HTH tetR-type domain is found at 9–69 (NSRRGELLEL…ELLRGFLDWL (61 aa)). The H-T-H motif DNA-binding region spans 32 to 51 (TVRDIADGAGILSGSLYHHF).

As to quaternary structure, homodimer.

Controls the expression of a small regulon that may play a role in the utilization of cholesterol. The polypeptide is HTH-type transcriptional repressor KstR2 (kstR2) (Mycobacterium tuberculosis (strain CDC 1551 / Oshkosh)).